We begin with the raw amino-acid sequence, 216 residues long: GTP cyclohydrolase-2 (216 aa).

50 to 54 is a binding site for GTP; sequence RIHSE. The Zn(2+) site is built by Cys-55, Cys-66, and Cys-68. GTP contacts are provided by residues Gln-71, 93-95, and Thr-115; that span reads EGR. Asp-127 functions as the Proton acceptor in the catalytic mechanism. Arg-129 (nucleophile) is an active-site residue. Thr-150 and Lys-155 together coordinate GTP.

This sequence belongs to the GTP cyclohydrolase II family. It depends on Zn(2+) as a cofactor.

The enzyme catalyses GTP + 4 H2O = 2,5-diamino-6-hydroxy-4-(5-phosphoribosylamino)-pyrimidine + formate + 2 phosphate + 3 H(+). The protein operates within cofactor biosynthesis; riboflavin biosynthesis; 5-amino-6-(D-ribitylamino)uracil from GTP: step 1/4. Catalyzes the conversion of GTP to 2,5-diamino-6-ribosylamino-4(3H)-pyrimidinone 5'-phosphate (DARP), formate and pyrophosphate. In Histophilus somni (strain 129Pt) (Haemophilus somnus), this protein is GTP cyclohydrolase-2.